The following is a 247-amino-acid chain: UPF0659 protein C216.03 (247 aa).

The protein belongs to the UPF0659 family.

The protein resides in the cytoplasm. It localises to the nucleus. The chain is UPF0659 protein C216.03 from Schizosaccharomyces pombe (strain 972 / ATCC 24843) (Fission yeast).